A 164-amino-acid chain; its full sequence is Histone H1 (164 aa).

The span at 1-10 (MAPRSSTSKS) shows a compositional bias: polar residues. The disordered stretch occupies residues 1–164 (MAPRSSTSKS…KKSSKPAKKN (164 aa)). The span at 16–27 (KDHKKAPIKKAI) shows a compositional bias: basic residues. A phosphothreonine mark is found at Thr-47 and Thr-54. 3 stretches are compositionally biased toward basic and acidic residues: residues 49–61 (VKKD…ADTK), 69–89 (TMKE…GDKK), and 117–156 (TKKE…DAKK).

Post-translationally, cell-growth/division-associated phosphorylation by a CDC2-like kinase.

The protein resides in the nucleus. Its subcellular location is the chromosome. Its function is as follows. Histones H1 are necessary for the condensation of nucleosome chains into higher-order structures. This Tetrahymena thermophila (strain SB210) protein is Histone H1 (HHO).